The primary structure comprises 713 residues: MQPRTPLVLCVLLSQVLLLTSAEDLDCIPGFQQKVFHINQPAEFIEDQSILNLTFSDCKGNDKLRYEVSSPYFKVNSDGGLVALRNITAVGKTLFVHARTPHAEDMAELVIVGGKDIQGSLQDIFKFARTSPVPRQKRSIVVSPILIPENQRQPFPRDVGKVVDSDRPERSKFRLTGKGVDQEPKGIFRINENTGSVSVTRTLDREVIAVYQLFVETTDVNGKTLEGPVPLEVIVIDQNDNRPIFREGPYIGHVMEGSPTGTTVMRMTAFDADDPATDNALLRYNIRQQTPDKPSPNMFYIDPEKGDIVTVVSPALLDRETLENPKYELIIEAQDMAGLDVGLTGTATATIMIDDKNDHSPKFTKKEFQATVEEGAVGVIVNLTVEDKDDPTTGAWRAAYTIINGNPGQSFEIHTNPQTNEGMLSVVKPLGYEISAFHTLLIKVENEDPLVPDVSYGPSSTATVHITVLDVNEGPVFYPDPMMVTRQENISVGSVLLTVNATDPDSLQHQTIRYSVYKDPAGWLNINPINGTVDTTAVLDRESPFVDNSVYTALFLAIDSGNPPATGTGTLLITLEDVNDNAPFIYPTVAEVCDDAKNLSVVILGASDKDLHPNTDPFKFEIHKQAVPDKVWKISKINNTHALVSLLQNLNKANYNLPIMVTDSGKPPMTNITDLRVQVCSCRNSKVDSNAVGALRFSLPSLLLLSLFSLACL.

An N-terminal signal peptide occupies residues 1 to 22 (MQPRTPLVLCVLLSQVLLLTSA). The propeptide occupies 23-138 (EDLDCIPGFQ…RTSPVPRQKR (116 aa)). 2 N-linked (GlcNAc...) asparagine glycosylation sites follow: asparagine 52 and asparagine 86. 5 Cadherin domains span residues 139–245 (SIVV…RPIF), 246–363 (REGP…SPKF), 364–477 (TKKE…GPVF), 478–585 (YPDP…APFI), and 584–690 (FIYP…VDSN). N-linked (GlcNAc...) asparagine glycosylation is found at asparagine 382, asparagine 489, asparagine 500, asparagine 530, asparagine 598, asparagine 638, and asparagine 671. The GPI-anchor amidated asparagine moiety is linked to residue asparagine 690. Positions 691-713 (AVGALRFSLPSLLLLSLFSLACL) are cleaved as a propeptide — removed in mature form.

By contrast to classical cadherins, homodimerization in trans is not mediated by cadherin EC1 domain strand-swapping, but instead through a homophilic adhesive interface which joins two elongated EC1-EC2 domains through a region near their Ca2+-binding sites to form a tetrahedral, X-like shape.

The protein localises to the cell membrane. It localises to the cytoplasm. Functionally, cadherins are calcium-dependent cell adhesion proteins. They preferentially interact with themselves in a homophilic manner in connecting cells; cadherins may thus contribute to the sorting of heterogeneous cell types. May act as a negative regulator of neural cell growth. The protein is Cadherin-13 (CDH13) of Pongo abelii (Sumatran orangutan).